A 692-amino-acid chain; its full sequence is Transforming growth factor beta activator LRRC33 (692 aa).

The signal sequence occupies residues 1–24 (MEFLPLWLCLGFHFLIVEWRSGRG). At 25-650 (TATAASQGGC…CKWGQVDTGL (626 aa)) the chain is on the extracellular side. Positions 29-56 (ASQGGCKVVDRVADCRSLNLASVPSGLP) constitute an LRRNT domain. LRR repeat units lie at residues 58–79 (HSRM…SLQA), 82–103 (RLED…AFHE), 106–127 (HLQN…SATA), 133–155 (RLRR…MLQN), 158–179 (SLEV…VFEG), 182–203 (RLVE…AFDG), 206–227 (ELRR…SLTQ), 228–239 (LRFLNVSYNILE), 251–272 (ELEI…PQCG), and 273–294 (KLHT…YNTS). Asn74 is a glycosylation site (N-linked (GlcNAc...) asparagine). Asn155 is a glycosylation site (N-linked (GlcNAc...) asparagine). An N-linked (GlcNAc...) asparagine glycan is attached at Asn232. 3 N-linked (GlcNAc...) asparagine glycosylation sites follow: Asn292, Asn309, and Asn312. LRR repeat units follow at residues 329-350 (ALRF…FLKK), 353-374 (SLSH…EHEP), 377-398 (ALTE…PGLT), 403-424 (NLRV…LFHS), 427-448 (SITT…VPLD), 463-484 (SLRS…PFQG), 486-507 (SLTH…SPLS), 512-533 (TLQV…MDFS), 537-558 (NLRE…KGSS), 559-580 (ALQT…VVSE), and 585-605 (GLQT…EGWG). Asn408 carries an N-linked (GlcNAc...) asparagine glycan. Asn500 carries N-linked (GlcNAc...) asparagine glycosylation. One can recognise an LRRCT domain in the interval 606-643 (ALQHFKTIADLSMVTCNLSSKIIRVVELPEGIPQDCKW). The N-linked (GlcNAc...) asparagine glycan is linked to Asn622. The helical transmembrane segment at 651-671 (FYLVLILPSCLTLLVASTVIF) threads the bilayer. Over 672 to 692 (LTFKKPLLQVIKSRCHWSSIY) the chain is Cytoplasmic.

The protein belongs to the LRRC32/LRRC33 family. Interacts (via LRR repeats) with TLR2, TLR3, TLR4, TLR9 and probably other Toll-like receptors. Interacts with CYBB/NOX2; the interaction is direct. Interacts with TGFB1; associates via disulfide bonds with the Latency-associated peptide chain (LAP) regulatory chain of TGFB1, leading to regulate activation of TGF-beta-1.

The protein localises to the cell membrane. The protein resides in the endoplasmic reticulum membrane. Functionally, key regulator of transforming growth factor beta-1 (TGFB1) specifically required for microglia function in the nervous system. Required for activation of latent TGF-beta-1 in macrophages and microglia: associates specifically via disulfide bonds with the Latency-associated peptide (LAP), which is the regulatory chain of TGFB1, and regulates integrin-dependent activation of TGF-beta-1. TGF-beta-1 activation mediated by LRRC33/NRROS is highly localized: there is little spreading of TGF-beta-1 activated from one microglial cell to neighboring microglia, suggesting the existence of localized and selective activation of TGF-beta-1 by LRRC33/NRROS. Indirectly plays a role in Toll-like receptor (TLR) signaling: ability to inhibit TLR-mediated NF-kappa-B activation and cytokine production is probably a consequence of its role in TGF-beta-1 signaling. The sequence is that of Transforming growth factor beta activator LRRC33 from Rattus norvegicus (Rat).